A 388-amino-acid polypeptide reads, in one-letter code: MEGRKEMLMYLEGGQLGTLVGKRMAHLSDAVGSPMAESQDKLVPKSPRAGPIAPTDRAEESEVEVGQATGQQRSRSPQLRISSPHPPAHSDSLSTKGQHSSSDTESDFYEEIEVSCTPDCNSAASDYQQHSAGQCSEPMGGSPVNGSDSSKGGGGSHGSFSACAGDQMRRYRTAFTREQIARLEKEFYRENYVSRPRRCELAAALNLPETTIKVWFQNRRMKDKRQRLAMTWPHPADPAFYTYMMSHAAATGNLPYPFPSHLPLPYYSHMGISAGSTAAATPFSAPLRPLDTFRVLSHPYPRPDLLCAFRHPSIYASPAHGLGSGGSPCSCLACLSTSTNGLGQRAAASDFTCSSTSRSDSFLTFTPSILSKSSSVSLDQREEVPLTR.

Disordered stretches follow at residues 30-109 and 131-163; these read AVGS…SDFY and SAGQCSEPMGGSPVNGSDSSKGGGGSHGSFSAC. Polar residues-rich tracts occupy residues 68-81 and 91-103; these read ATGQQRSRSPQLRI and DSLSTKGQHSSSD. The homeobox DNA-binding region spans 168-227; the sequence is MRRYRTAFTREQIARLEKEFYRENYVSRPRRCELAAALNLPETTIKVWFQNRRMKDKRQR.

The protein belongs to the even-skipped homeobox family.

It is found in the nucleus. Functionally, may be required for posterior development and development of normal embryonic axial pattern. This is Homeobox protein XHOX-3 (xhox3) from Xenopus laevis (African clawed frog).